The following is a 319-amino-acid chain: Cytochrome c biogenesis protein CcsA (319 aa).

7 helical membrane-spanning segments follow: residues 9-29, 44-64, 71-91, 143-163, 225-245, 259-273, and 286-306; these read ILTH…LITL, GVIG…AYSG, LYES…FPYL, MVLG…LLVI, IISL…VWAN, TWAF…IYLH, and AIVA…VNLL.

It belongs to the CcmF/CycK/Ccl1/NrfE/CcsA family. In terms of assembly, may interact with Ccs1.

Its subcellular location is the plastid. The protein localises to the chloroplast thylakoid membrane. In terms of biological role, required during biogenesis of c-type cytochromes (cytochrome c6 and cytochrome f) at the step of heme attachment. This is Cytochrome c biogenesis protein CcsA from Oenothera argillicola (Appalachian evening primrose).